A 265-amino-acid chain; its full sequence is Adenosine 5'-phosphosulfate reductase (265 aa).

[4Fe-4S] cluster is bound by residues Cys-135, Cys-136, Cys-218, and Cys-221. Cys-246 acts as the Nucleophile; cysteine thiosulfonate intermediate in catalysis.

This sequence belongs to the PAPS reductase family. CysH subfamily. [4Fe-4S] cluster serves as cofactor.

Its subcellular location is the cytoplasm. The enzyme catalyses [thioredoxin]-disulfide + sulfite + AMP + 2 H(+) = adenosine 5'-phosphosulfate + [thioredoxin]-dithiol. The protein operates within sulfur metabolism; hydrogen sulfide biosynthesis; sulfite from sulfate. Catalyzes the formation of sulfite from adenosine 5'-phosphosulfate (APS) using thioredoxin as an electron donor. The polypeptide is Adenosine 5'-phosphosulfate reductase (Rhizobium meliloti (strain 1021) (Ensifer meliloti)).